A 432-amino-acid chain; its full sequence is Probable exopolygalacturonase C (432 aa).

Residues 1 to 20 (MPISKGIFLSLLSTLPLALA) form the signal peptide. N-linked (GlcNAc...) asparagine glycosylation is found at Asn33, Asn73, Asn90, and Asn140. 2 PbH1 repeats span residues 206–227 (GTNIRISDSVMYNGDDAIAVGS) and 229–250 (SHDIVFERNTIGYQSHGMSIGS). Asp220 acts as the Proton donor in catalysis. His244 is a catalytic residue. A glycan (N-linked (GlcNAc...) asparagine) is linked at Asn260. The stretch at 261–282 (ITNLRFEDVTVIDALYAARFKS) is one PbH1 3 repeat. N-linked (GlcNAc...) asparagine glycosylation is found at Asn292 and Asn302. The cysteines at positions 377 and 383 are disulfide-linked. N-linked (GlcNAc...) asparagine glycosylation occurs at Asn407.

This sequence belongs to the glycosyl hydrolase 28 family.

It localises to the secreted. It carries out the reaction [(1-&gt;4)-alpha-D-galacturonosyl](n) + H2O = alpha-D-galacturonate + [(1-&gt;4)-alpha-D-galacturonosyl](n-1). Functionally, specific in hydrolyzing the terminal glycosidic bond of polygalacturonic acid and oligogalacturonates. This chain is Probable exopolygalacturonase C (pgxC), found in Aspergillus terreus (strain NIH 2624 / FGSC A1156).